An 89-amino-acid polypeptide reads, in one-letter code: Small ribosomal subunit protein uS15 (89 aa).

Belongs to the universal ribosomal protein uS15 family. In terms of assembly, part of the 30S ribosomal subunit. Forms a bridge to the 50S subunit in the 70S ribosome, contacting the 23S rRNA.

In terms of biological role, one of the primary rRNA binding proteins, it binds directly to 16S rRNA where it helps nucleate assembly of the platform of the 30S subunit by binding and bridging several RNA helices of the 16S rRNA. Forms an intersubunit bridge (bridge B4) with the 23S rRNA of the 50S subunit in the ribosome. The sequence is that of Small ribosomal subunit protein uS15 from Bacillus anthracis (strain CDC 684 / NRRL 3495).